Here is a 448-residue protein sequence, read N- to C-terminus: Trigger factor (448 aa).

A PPIase FKBP-type domain is found at 162–243 (DDFAIIDIEA…VQQTKERKLP (82 aa)). The segment at 426-448 (DEGKAVDPSEYFGEEEESAEESE) is disordered. The segment covering 437 to 448 (FGEEEESAEESE) has biased composition (acidic residues).

It belongs to the FKBP-type PPIase family. Tig subfamily.

It localises to the cytoplasm. It carries out the reaction [protein]-peptidylproline (omega=180) = [protein]-peptidylproline (omega=0). Functionally, involved in protein export. Acts as a chaperone by maintaining the newly synthesized protein in an open conformation. Functions as a peptidyl-prolyl cis-trans isomerase. The polypeptide is Trigger factor (Corynebacterium diphtheriae (strain ATCC 700971 / NCTC 13129 / Biotype gravis)).